Here is a 1038-residue protein sequence, read N- to C-terminus: Isoleucine--tRNA ligase (1038 aa).

The 'HIGH' region signature appears at 48–58 (PTANGKPHVGH). Positions 590 to 594 (KMSKS) match the 'KMSKS' region motif. Lysine 593 contacts ATP.

This sequence belongs to the class-I aminoacyl-tRNA synthetase family. IleS type 2 subfamily. As to quaternary structure, monomer. The cofactor is Zn(2+).

It is found in the cytoplasm. The catalysed reaction is tRNA(Ile) + L-isoleucine + ATP = L-isoleucyl-tRNA(Ile) + AMP + diphosphate. Catalyzes the attachment of isoleucine to tRNA(Ile). As IleRS can inadvertently accommodate and process structurally similar amino acids such as valine, to avoid such errors it has two additional distinct tRNA(Ile)-dependent editing activities. One activity is designated as 'pretransfer' editing and involves the hydrolysis of activated Val-AMP. The other activity is designated 'posttransfer' editing and involves deacylation of mischarged Val-tRNA(Ile). This chain is Isoleucine--tRNA ligase, found in Clostridium novyi (strain NT).